Consider the following 562-residue polypeptide: Solute carrier family 22 member 6 (562 aa).

Topologically, residues 1–15 are cytoplasmic; sequence MPFSELLEQVGSTGR. The chain crosses the membrane as a helical span at residues 16-36; that stretch reads FQVLHVTLLCIPVLMMASHNL. Residues 37 to 147 lie on the Extracellular side of the membrane; the sequence is LQNFVATVPS…LVCDMHSFKQ (111 aa). The chain crosses the membrane as a helical span at residues 148-168; that stretch reads MGQTIYMGGVLVGALLFGGLS. The Cytoplasmic segment spans residues 169-174; that stretch reads DRYGRR. The helical transmembrane segment at 175–195 threads the bilayer; that stretch reads ILLLISNLLMAVSGTCAAFSS. The Extracellular portion of the chain corresponds to 196–205; that stretch reads SFSLFCVFRF. The chain crosses the membrane as a helical span at residues 206–226; the sequence is GCGLALSGLGLNTFSLIVEWI. At 227–235 the chain is on the cytoplasmic side; sequence PTRIRTAVG. Residues 236–256 form a helical membrane-spanning segment; that stretch reads TTTGYCYTLGQLILVLLAYFI. Residues 257–260 are Extracellular-facing; that stretch reads RDWR. A helical transmembrane segment spans residues 261 to 281; the sequence is WLTLAVSLPFYVFFLIAWWFH. At 282 to 351 the chain is on the cytoplasmic side; that stretch reads ESSRWLALSN…FNTPAMRKRT (70 aa). Residues 352–372 traverse the membrane as a helical segment; the sequence is LCLSAVWLSTSFAYYGLAMDL. Over 373-378 the chain is Extracellular; the sequence is DKFGVD. The chain crosses the membrane as a helical span at residues 379 to 399; sequence IYLIQVIFGAVDIPAKVVVVV. Over 400-408 the chain is Cytoplasmic; it reads SMSLIGRRR. The helical transmembrane segment at 409–429 threads the bilayer; the sequence is SQCAVLVVAGITILLNLLVPY. Residues 430–444 lie on the Extracellular side of the membrane; it reads DKQTIRTCLAVLGKG. The helical transmembrane segment at 445 to 465 threads the bilayer; it reads CLAASFNCCYLYSGELFPTII. Over 466 to 468 the chain is Cytoplasmic; sequence RQN. A helical membrane pass occupies residues 469–489; that stretch reads GMGWVSMMARIGAMVAPMVLL. Topologically, residues 490–495 are extracellular; the sequence is TRDYIP. Residues 496–516 form a helical membrane-spanning segment; that stretch reads WLPGLIYGGAPILSGLAAIFL. Topologically, residues 517-562 are cytoplasmic; the sequence is PETLGYPLPDTIQDVEESGSGRKSKMSTKETITLQDKQANLLKQSA.

It belongs to the major facilitator (TC 2.A.1) superfamily. Organic cation transporter (TC 2.A.1.19) family. In terms of processing, glycosylated. Glycosylation is necessary for proper targeting of the transporter to the plasma membrane.

It localises to the cell membrane. Its subcellular location is the basolateral cell membrane. The protein localises to the basal cell membrane. Functionally, involved in the renal elimination of endogenous and exogenous organic anions. Functions as organic anion exchanger when the uptake of one molecule of organic anion is coupled with an efflux of one molecule of endogenous dicarboxylic acid (glutarate, ketoglutarate, etc). Mediates the sodium-independent uptake of p-aminohippurate (PAH), 2,3-dimercapto-1-propanesulfonic acid (DMPS), cidofovir, adefovir, 9-(2-phosphonylmethoxyethyl) guanine (PMEG), 9-(2-phosphonylmethoxyethyl) diaminopurine (PMEDAP), ochratoxin (OTA), acyclovir (ACV), 3'-azido-3-'deoxythymidine (AZT), cimetidine (CMD), 2,4-dichloro-phenoxyacetate (2,4-D), hippurate (HA), indoleacetate (IA), indoxyl sulfate (IS), 3-carboxy-4-methyl-5-propyl-2-furanpropionate (CMPF) and edaravone sulfate. Mediates the sodium-independent uptake of p-aminohippurate (PAH). PAH uptake is inhibited by p-chloromercuribenzenesulphonate (PCMBS), diethyl pyrocarbonate (DEPC), indomethacin, sulindac, diclofenac, carprofen, okadaic acid, benzothiazolylcysteine (BTC), S-chlorotrifluoroethylcysteine (CTFC), cysteine S-conjugates S-dichlorovinylcysteine (DCVC), furosemide, steviol, phorbol 12-myristate 13-acetate (PMA), calcium ionophore A23187, benzylpenicillin, bumetamide, losartan, probenecid, phenol red, urate, glutarate and alpha-ketoglutarate. PAH uptake is inhibited by glutarate. This chain is Solute carrier family 22 member 6 (SLC22A6), found in Pseudopleuronectes americanus (Winter flounder).